The chain runs to 225 residues: Protein-L-isoaspartate O-methyltransferase (225 aa).

Serine 75 is an active-site residue.

It belongs to the methyltransferase superfamily. L-isoaspartyl/D-aspartyl protein methyltransferase family.

It is found in the cytoplasm. The catalysed reaction is [protein]-L-isoaspartate + S-adenosyl-L-methionine = [protein]-L-isoaspartate alpha-methyl ester + S-adenosyl-L-homocysteine. Its function is as follows. Catalyzes the methyl esterification of L-isoaspartyl residues in peptides and proteins that result from spontaneous decomposition of normal L-aspartyl and L-asparaginyl residues. It plays a role in the repair and/or degradation of damaged proteins. The chain is Protein-L-isoaspartate O-methyltransferase from Stenotrophomonas maltophilia (strain K279a).